Reading from the N-terminus, the 361-residue chain is MKNLFLYCRAGYEKDCAAEIQQRAAELGIGGFVKANRDDAYVVFQGFSPDDGDRLAKELPLDSLIFARQMFACGDLLDDFSPEDRVTPIAESLTEVERAGELRVETPDTNEAKELSAFCRKFTVPLRQALKKRGVLLDKESSRRPIVHVCFVAPNKAFTGYSLSNNSSPHFMGIPRLKFPADAPSRSTLKLDEAFIHFIPREEHETRLRSGLNAVDLGACPGGWTYQLVRRGMMVHAIDNGPMNHDLMETGQVTHHRADGFKFEPARRNIYWLVCDMVEKPARVAELMEYWAIQGWFKEAIFNLKLPMKSRYKEVSQILANMHAILKENGIHEFHLACKHLYHDRDEVTVHLWLRPSSPWI.

S-adenosyl-L-methionine-binding positions include Ser187, 220–223 (CPGG), Asp239, Asp259, and Asp276. The Proton acceptor role is filled by Lys305.

The protein belongs to the class I-like SAM-binding methyltransferase superfamily. RNA methyltransferase RlmE family. RlmM subfamily. In terms of assembly, monomer.

It is found in the cytoplasm. It catalyses the reaction cytidine(2498) in 23S rRNA + S-adenosyl-L-methionine = 2'-O-methylcytidine(2498) in 23S rRNA + S-adenosyl-L-homocysteine + H(+). In terms of biological role, catalyzes the 2'-O-methylation at nucleotide C2498 in 23S rRNA. This Shewanella amazonensis (strain ATCC BAA-1098 / SB2B) protein is Ribosomal RNA large subunit methyltransferase M.